A 253-amino-acid polypeptide reads, in one-letter code: DNA repair protein RecO (253 aa).

It belongs to the RecO family.

Functionally, involved in DNA repair and RecF pathway recombination. This chain is DNA repair protein RecO, found in Pediococcus pentosaceus (strain ATCC 25745 / CCUG 21536 / LMG 10740 / 183-1w).